We begin with the raw amino-acid sequence, 692 residues long: DNA ligase (692 aa).

Residues 34 to 38 (DAEYD), 83 to 84 (SL), and E124 contribute to the NAD(+) site. The active-site N6-AMP-lysine intermediate is the K126. R147, E193, K310, and K334 together coordinate NAD(+). The Zn(2+) site is built by C428, C431, C446, and C452. In terms of domain architecture, BRCT spans 612–692 (AGVAGVSGKT…ALLALLAGNA (81 aa)).

This sequence belongs to the NAD-dependent DNA ligase family. LigA subfamily. Mg(2+) serves as cofactor. Requires Mn(2+) as cofactor.

The catalysed reaction is NAD(+) + (deoxyribonucleotide)n-3'-hydroxyl + 5'-phospho-(deoxyribonucleotide)m = (deoxyribonucleotide)n+m + AMP + beta-nicotinamide D-nucleotide.. Its function is as follows. DNA ligase that catalyzes the formation of phosphodiester linkages between 5'-phosphoryl and 3'-hydroxyl groups in double-stranded DNA using NAD as a coenzyme and as the energy source for the reaction. It is essential for DNA replication and repair of damaged DNA. This chain is DNA ligase, found in Laribacter hongkongensis (strain HLHK9).